The sequence spans 123 residues: Angiogenin-2 (123 aa).

Q1 is subject to Pyrrolidone carboxylic acid. H12 acts as the Proton acceptor in catalysis. 3 disulfides stabilise this stretch: C25–C80, C38–C91, and C56–C106. The Nucleolar localization signal motif lies at E30–M34. N-linked (GlcNAc...) asparagine glycosylation is present at N33. Zn(2+) contacts are provided by D40, H82, and H113. H113 acts as the Proton donor in catalysis.

It belongs to the pancreatic ribonuclease family. As to expression, serum and milk.

Its subcellular location is the cytoplasmic vesicle. The protein resides in the secretory vesicle lumen. It localises to the secreted. The protein localises to the nucleus. It is found in the nucleolus. Divalent metal ions, such as Cu2+ and Zn2+, may inhibit the ribonucleolytic activity. Functionally, binds tightly to placental ribonuclease inhibitor and has very low ribonuclease activity. Has potent angiogenic activity. Angiogenin induces vascularization of normal and malignant tissues. Abolishes protein synthesis by specifically hydrolyzing cellular tRNAs. The polypeptide is Angiogenin-2 (Bos taurus (Bovine)).